Here is a 188-residue protein sequence, read N- to C-terminus: NAD(P)H-quinone oxidoreductase subunit 6, chloroplastic (188 aa).

5 helical membrane-spanning segments follow: residues 10–30 (GILLIIELGILLGSMGVILLN), 32–52 (IVQSAFSLGLTFISISLLYLV), 61–81 (AQVLIYVGAINVLIVFSVMLI), 97–117 (GNNITLIVCTSLFLFLVSIIL), and 153–173 (FLLPFELLSVLLLVALVGAIT).

It belongs to the complex I subunit 6 family. As to quaternary structure, NDH is composed of at least 16 different subunits, 5 of which are encoded in the nucleus.

It localises to the plastid. Its subcellular location is the chloroplast thylakoid membrane. The catalysed reaction is a plastoquinone + NADH + (n+1) H(+)(in) = a plastoquinol + NAD(+) + n H(+)(out). The enzyme catalyses a plastoquinone + NADPH + (n+1) H(+)(in) = a plastoquinol + NADP(+) + n H(+)(out). In terms of biological role, NDH shuttles electrons from NAD(P)H:plastoquinone, via FMN and iron-sulfur (Fe-S) centers, to quinones in the photosynthetic chain and possibly in a chloroplast respiratory chain. The immediate electron acceptor for the enzyme in this species is believed to be plastoquinone. Couples the redox reaction to proton translocation, and thus conserves the redox energy in a proton gradient. This chain is NAD(P)H-quinone oxidoreductase subunit 6, chloroplastic (ndhG), found in Psilotum nudum (Whisk fern).